Reading from the N-terminus, the 706-residue chain is Putative pentatricopeptide repeat-containing protein At3g47840 (706 aa).

PPR repeat units follow at residues 39–69 (VKFD…MPHG), 70–104 (DIVS…DHAV), 107–141 (DTSV…SLLS), 142–172 (SVYV…MPFR), 173–203 (NAVT…MSRS), 208–242 (DTYT…GFVT), 243–273 (TLCV…MSER), 274–308 (DVVS…QVPP), 309–343 (NEQT…GLND), 344–374 (SLSV…MRCR), 375–409 (DIIS…GTKP), 410–444 (TDFA…GLEQ), 445–475 (NSTV…TDRD), 476–510 (DIVS…GFRP), 511–541 (DSVT…MQET), and 547–577 (AKEH…MSWK). The segment at 582 to 657 (VWTTLLIACK…EPGWSSIKIK (76 aa)) is type E motif. The interval 658–688 (DCVSAFVSGDRFHPQSEDIYNILELAVSGAE) is type E(+) motif.

Belongs to the PPR family. PCMP-E subfamily.

The sequence is that of Putative pentatricopeptide repeat-containing protein At3g47840 (PCMP-E43) from Arabidopsis thaliana (Mouse-ear cress).